Consider the following 180-residue polypeptide: uncharacterized protein (180 aa).

2 consecutive transmembrane segments (helical) span residues 37 to 59 (VLHA…FPSF) and 128 to 147 (AGSA…VLFV).

The protein resides in the cell membrane. This is an uncharacterized protein from Treponema pallidum (strain Nichols).